Consider the following 134-residue polypeptide: Profilin-4 (134 aa).

Cysteines 13 and 118 form a disulfide. The short motif at 84–100 (AVIRGKKGSGGITIKKT) is the Involved in PIP2 interaction element. T114 is subject to Phosphothreonine.

The protein belongs to the profilin family. As to quaternary structure, occurs in many kinds of cells as a complex with monomeric actin in a 1:1 ratio. Post-translationally, phosphorylated by MAP kinases.

The protein resides in the cytoplasm. It is found in the cytoskeleton. Its function is as follows. Binds to actin and affects the structure of the cytoskeleton. At high concentrations, profilin prevents the polymerization of actin, whereas it enhances it at low concentrations. This chain is Profilin-4, found in Olea europaea (Common olive).